A 450-amino-acid chain; its full sequence is tRNA-2-methylthio-N(6)-dimethylallyladenosine synthase (450 aa).

The MTTase N-terminal domain occupies 14 to 132 (GEFFIETWGC…FPNYLNEVKK (119 aa)). Residues Cys-23, Cys-59, Cys-93, Cys-169, Cys-173, and Cys-176 each contribute to the [4Fe-4S] cluster site. A Radical SAM core domain is found at 155 to 385 (RKNSMKAFVT…VEVVNEISAK (231 aa)). Residues 388 to 450 (KAYEGKIEEV…NSFSLTGEEI (63 aa)) form the TRAM domain.

This sequence belongs to the methylthiotransferase family. MiaB subfamily. As to quaternary structure, monomer. [4Fe-4S] cluster serves as cofactor.

The protein resides in the cytoplasm. The enzyme catalyses N(6)-dimethylallyladenosine(37) in tRNA + (sulfur carrier)-SH + AH2 + 2 S-adenosyl-L-methionine = 2-methylsulfanyl-N(6)-dimethylallyladenosine(37) in tRNA + (sulfur carrier)-H + 5'-deoxyadenosine + L-methionine + A + S-adenosyl-L-homocysteine + 2 H(+). Its function is as follows. Catalyzes the methylthiolation of N6-(dimethylallyl)adenosine (i(6)A), leading to the formation of 2-methylthio-N6-(dimethylallyl)adenosine (ms(2)i(6)A) at position 37 in tRNAs that read codons beginning with uridine. The chain is tRNA-2-methylthio-N(6)-dimethylallyladenosine synthase from Clostridium botulinum (strain Okra / Type B1).